A 394-amino-acid polypeptide reads, in one-letter code: Glycerol-1-phosphate dehydrogenase [NAD(P)+] (394 aa).

NAD(+)-binding positions include Asp54, 116–120, and 138–141; these read GTIHD and TAPS. Asp143 contributes to the substrate binding site. NAD(+) is bound at residue Ser147. Asp190 serves as a coordination point for substrate. The Ni(2+) site is built by Asp190 and His270. His274 contacts substrate. His290 contributes to the Ni(2+) binding site.

It belongs to the glycerol-1-phosphate dehydrogenase family. In terms of assembly, homodimer. The cofactor is Ni(2+).

It is found in the cytoplasm. It carries out the reaction sn-glycerol 1-phosphate + NAD(+) = dihydroxyacetone phosphate + NADH + H(+). The catalysed reaction is sn-glycerol 1-phosphate + NADP(+) = dihydroxyacetone phosphate + NADPH + H(+). Its function is as follows. Catalyzes the NAD(P)H-dependent reduction of dihydroxyacetonephosphate (DHAP or glycerone phosphate) to glycerol 1-phosphate (G1P). The G1P thus generated is probably used for the synthesis of phosphoglycerolipids in Gram-positive bacterial species. Prefers NADH over NADPH as coenzyme. Is also able to catalyze the reverse reaction, i.e. the NAD(+)-dependent oxidation of G1P but not of G3P. Does not possess glycerol dehydrogenase activity. This is Glycerol-1-phosphate dehydrogenase [NAD(P)+] (egsA) from Bacillus subtilis (strain 168).